The primary structure comprises 508 residues: Light-independent protochlorophyllide reductase subunit B (508 aa).

Asp-36 lines the [4Fe-4S] cluster pocket. The active-site Proton donor is the Asp-294. A substrate-binding site is contributed by 429–430 (GM).

This sequence belongs to the ChlB/BchB/BchZ family. Protochlorophyllide reductase is composed of three subunits; ChlL, ChlN and ChlB. Forms a heterotetramer of two ChlB and two ChlN subunits. [4Fe-4S] cluster serves as cofactor.

It catalyses the reaction chlorophyllide a + oxidized 2[4Fe-4S]-[ferredoxin] + 2 ADP + 2 phosphate = protochlorophyllide a + reduced 2[4Fe-4S]-[ferredoxin] + 2 ATP + 2 H2O. Its pathway is porphyrin-containing compound metabolism; chlorophyll biosynthesis (light-independent). In terms of biological role, component of the dark-operative protochlorophyllide reductase (DPOR) that uses Mg-ATP and reduced ferredoxin to reduce ring D of protochlorophyllide (Pchlide) to form chlorophyllide a (Chlide). This reaction is light-independent. The NB-protein (ChlN-ChlB) is the catalytic component of the complex. The chain is Light-independent protochlorophyllide reductase subunit B from Nostoc sp. (strain PCC 7120 / SAG 25.82 / UTEX 2576).